The primary structure comprises 202 residues: Translation initiation factor IF-3 (202 aa).

Residues 172 to 202 are disordered; the sequence is KTRASARHPEVPGAGSVQDIDATGDTDGSPH.

This sequence belongs to the IF-3 family. Monomer.

The protein localises to the cytoplasm. Functionally, IF-3 binds to the 30S ribosomal subunit and shifts the equilibrium between 70S ribosomes and their 50S and 30S subunits in favor of the free subunits, thus enhancing the availability of 30S subunits on which protein synthesis initiation begins. This chain is Translation initiation factor IF-3, found in Mycobacterium leprae (strain TN).